The following is a 232-amino-acid chain: Sensory rhodopsin III (232 aa).

Helical transmembrane passes span 5-25 (IVWYGAGAGAFFVSAVVFVWF), 39-59 (LPPIHTSVAGAAYVAMALIAG), 73-93 (FADWIVSTPIITYYLARLAGV), 100-120 (LAVAANVVMIGVGYGFVSMSG), 125-145 (IAFAVSTVAFIGLLYLYIKTF), 168-188 (VVTWSLYPVVYFLGPLGTGII), and 194-214 (NFLVAVLDTIAKVGFMSILLV). Lys205 carries the N6-(retinylidene)lysine modification.

The protein belongs to the archaeal/bacterial/fungal opsin family. In terms of assembly, interacts with HtrM. In terms of processing, the covalent binding of retinal to the apoprotein, bacterioopsin, generates bacteriorhodopsin.

The protein resides in the membrane. Functionally, sensory rhodopsin. Associates with an unusual transducer lacking a methyl-accepting transducer domain found in all other photosensory transducers. The chromophore is all-trans-retinal in the dark. The sequence is that of Sensory rhodopsin III (xop2) from Haloarcula marismortui (strain ATCC 43049 / DSM 3752 / JCM 8966 / VKM B-1809) (Halobacterium marismortui).